The chain runs to 471 residues: Putative multidrug resistance protein MdtD (471 aa).

Topologically, residues 1–11 are periplasmic; the sequence is MTDLPDSTRWQ. The chain crosses the membrane as a helical span at residues 12–32; sequence LWIVAFGFFMQSLDTTIVNTA. Residues 33–48 are Cytoplasmic-facing; sequence LPSMAQSLGESPLHMH. A helical membrane pass occupies residues 49 to 69; sequence MVIVSYVLTVAVMLPASGWLA. At 70–76 the chain is on the periplasmic side; the sequence is DKVGVRN. A helical membrane pass occupies residues 77-97; sequence IFFTAIVLFTLGSLFCALSGT. The Cytoplasmic segment spans residues 98–101; sequence LNEL. A helical transmembrane segment spans residues 102–124; the sequence is LLARALQGVGGAMMVPVGRLTVM. Residues 125–137 are Periplasmic-facing; the sequence is KIVPREQYMAAMT. A helical transmembrane segment spans residues 138-158; it reads FVTLPGQVGPLLGPALGGLLV. Residues 159–164 are Cytoplasmic-facing; the sequence is EYASWH. Residues 165 to 185 form a helical membrane-spanning segment; it reads WIFLINIPVGIIGAIATLMLM. At 186–196 the chain is on the periplasmic side; it reads PNYTMQTRRFD. Residues 197-217 form a helical membrane-spanning segment; the sequence is LSGFLLLAVGMAVLTLALDGS. At 218–224 the chain is on the cytoplasmic side; the sequence is KGTGLSP. A helical membrane pass occupies residues 225–245; the sequence is LTIAGLVAVGVVALVLYLLHA. At 246 to 262 the chain is on the periplasmic side; sequence RNNNRALFSLKLFRTRT. Residues 263–283 traverse the membrane as a helical segment; it reads FSLGLAGSFAGRIGSGMLPFM. Over 284–285 the chain is Cytoplasmic; it reads TP. A helical membrane pass occupies residues 286-306; it reads VFLQIGLGFSPFHAGLMMIPM. Over 307 to 341 the chain is Periplasmic; sequence VLGSMGMKRIVVQVVNCFGYRRVLVATTLGLSLVT. A helical transmembrane segment spans residues 342 to 362; that stretch reads LLFMTTALLGWYYVLPFVLFL. Residues 363–395 lie on the Cytoplasmic side of the membrane; the sequence is QGMVNSTRFSSMNTLTLKDLPDNLASSGNSLLS. The helical transmembrane segment at 396–416 threads the bilayer; it reads MIMQLSMSIGVTIAGLLLGLF. Residues 417–430 lie on the Periplasmic side of the membrane; that stretch reads GSQHVSVDSGTTQT. A helical membrane pass occupies residues 431–451; that stretch reads VFMYTWLSMALIIALPAFIFA. The Cytoplasmic segment spans residues 452–471; that stretch reads RVPNDTHQNVAISRRKRSAQ.

It belongs to the major facilitator superfamily. TCR/Tet family.

It localises to the cell inner membrane. This is Putative multidrug resistance protein MdtD from Escherichia coli O139:H28 (strain E24377A / ETEC).